Reading from the N-terminus, the 556-residue chain is Formate--tetrahydrofolate ligase (556 aa).

65 to 72 (TPAGEGKS) contributes to the ATP binding site.

Belongs to the formate--tetrahydrofolate ligase family.

It catalyses the reaction (6S)-5,6,7,8-tetrahydrofolate + formate + ATP = (6R)-10-formyltetrahydrofolate + ADP + phosphate. The protein operates within one-carbon metabolism; tetrahydrofolate interconversion. This chain is Formate--tetrahydrofolate ligase, found in Streptococcus thermophilus (strain ATCC BAA-491 / LMD-9).